Here is a 437-residue protein sequence, read N- to C-terminus: MIDYSAILNRYRPDEQELQKLKSISEYLTTRASEICRHKNIRADPVLVGSYAKGTNLKDGDLDLFIAFDRDYEEKIMEKLGLSIGHDLLPNGKEKYAEHPYVSGEIDGIKIDVVPCFKMEFGQKKISAVDRTLLHTRYVNEKLDGASKDQVRLLKVFMKSVGVYGAEARTYGFSGYLCELLIIRYGNFENVLRLFSTTRGRLKIDDDERFEDPMVLIDPVDPDRNVASAVSLESLSRMRIASKMFLDNPSESFFDLERKPIKPKYHDRGTCIRIYSIEKPDLTDDVLYPQIYKFKLALLRLMEEYNMEPVGSAIDVADRIYVLIETRKFISDSIRIHVGPPADTSNSIDFIKKWLTRERSRGPYLVGNRLYVDTVEERKTPEEIVLSNISKYSIGKNLDKLKNTIKVQKFEEIKGRIRVLDRFFSEEAFGGLNSLSA.

ATP-binding residues include Ser50 and Lys53. CTP contacts are provided by Ser50 and Lys53. Mg(2+)-binding residues include Asp61, Asp63, and Asp112. Residues His135, Lys155, and Tyr164 each coordinate ATP. His135, Lys155, and Tyr164 together coordinate CTP.

Belongs to the tRNA nucleotidyltransferase/poly(A) polymerase family. Archaeal CCA-adding enzyme subfamily. As to quaternary structure, homodimer. The cofactor is Mg(2+).

The catalysed reaction is a tRNA precursor + 2 CTP + ATP = a tRNA with a 3' CCA end + 3 diphosphate. It carries out the reaction a tRNA with a 3' CCA end + 2 CTP + ATP = a tRNA with a 3' CCACCA end + 3 diphosphate. In terms of biological role, catalyzes the addition and repair of the essential 3'-terminal CCA sequence in tRNAs without using a nucleic acid template. Adds these three nucleotides in the order of C, C, and A to the tRNA nucleotide-73, using CTP and ATP as substrates and producing inorganic pyrophosphate. tRNA 3'-terminal CCA addition is required both for tRNA processing and repair. Also involved in tRNA surveillance by mediating tandem CCA addition to generate a CCACCA at the 3' terminus of unstable tRNAs. While stable tRNAs receive only 3'-terminal CCA, unstable tRNAs are marked with CCACCA and rapidly degraded. The polypeptide is CCA-adding enzyme (Thermoplasma volcanium (strain ATCC 51530 / DSM 4299 / JCM 9571 / NBRC 15438 / GSS1)).